Reading from the N-terminus, the 130-residue chain is Large-conductance mechanosensitive channel (130 aa).

2 helical membrane passes run 14–34 (IIDL…VTSF) and 73–93 (FVDF…LVKF).

This sequence belongs to the MscL family. Homopentamer.

The protein localises to the cell membrane. Its function is as follows. Channel that opens in response to stretch forces in the membrane lipid bilayer. May participate in the regulation of osmotic pressure changes within the cell. This Oceanobacillus iheyensis (strain DSM 14371 / CIP 107618 / JCM 11309 / KCTC 3954 / HTE831) protein is Large-conductance mechanosensitive channel.